We begin with the raw amino-acid sequence, 107 residues long: Antimicrobial peptide damicornin (107 aa).

The first 22 residues, 1–22, serve as a signal peptide directing secretion; that stretch reads MKVLVILFGAMLVLMEFQKASA. The propeptide occupies 23–67; that stretch reads ATLLEDFDDDDDLLDDGGDFDLEANSDASSGNGNDSNDAVPEKRR. Acidic residues predominate over residues 37-46; that stretch reads DDGGDFDLEA. The tract at residues 37-62 is disordered; the sequence is DDGGDFDLEANSDASSGNGNDSNDAV. Low complexity predominate over residues 47 to 61; it reads NSDASSGNGNDSNDA. Cystine bridges form between Cys-69–Cys-105, Cys-78–Cys-99, and Cys-85–Cys-103. Position 106 is an arginine amide (Arg-106).

Belongs to the coral AMP family. As to expression, is specifically expressed in the granular cells of the ectoderm.

It is found in the cytoplasm. Its subcellular location is the stress granule. The protein localises to the secreted. Functionally, cationic peptide with probable antimicrobial activity against coral pathogens. Shows in vitro activity against Gram-positive bacteria and the filamentous fungus F.oxysporum (MIC=1.25 uM). Gram-positive bacteria tested are B.megaterium (MIC=20 uM), S.aureus (MIC=5 uM), M. luteus (MIC=1.25 uM), B.stationis (MIC=10 uM), M.maritypicum (MIC=20 uM). Has no or little effect against Gram-negative bacteria (the coral pathogen V.coralliilyticus (MIC&gt;20 uM), V.aesturianus (MIC&gt;20 uM), V.shiloi (MIC&gt;20 uM), and E.coli (MIC=10 uM)). Has no hemolytic activity against sheep erythrocytes. In Pocillopora damicornis (Cauliflower coral), this protein is Antimicrobial peptide damicornin.